Here is a 698-residue protein sequence, read N- to C-terminus: Testis-specific gene 10 protein (698 aa).

Ser-163 carries the post-translational modification Phosphoserine. The tract at residues Gln-556–Leu-689 is interaction with HIF1A. The segment covering His-659 to Cys-670 has biased composition (polar residues). The disordered stretch occupies residues His-659 to Leu-685. Over residues His-671–Leu-685 the composition is skewed to basic and acidic residues. A Phosphoserine modification is found at Ser-688.

It belongs to the CEP135/TSGA10 family. As to quaternary structure, interacts with HIF1A. Processed into N-terminal 27-kDa and C-terminal 55-kDa fragments. Expressed in the testis, in spermatozoa (at protein level). Expressed in actively dividing fetal tissues, including sternum, intestine, limb, kidney and stomach.

Its subcellular location is the cytoplasm. It is found in the cytoskeleton. The protein resides in the microtubule organizing center. The protein localises to the centrosome. It localises to the centriole. In terms of biological role, plays a role in spermatogenesis. When overexpressed, prevents nuclear localization of HIF1A. This chain is Testis-specific gene 10 protein (TSGA10), found in Homo sapiens (Human).